Here is a 539-residue protein sequence, read N- to C-terminus: Probable protein kinase UbiB (539 aa).

The 369-residue stretch at 125–493 (RFDVEPLASA…RRRQGDRWAL (369 aa)) folds into the Protein kinase domain. ATP-binding positions include 131 to 139 (LASASVAQV) and Lys-153. Asp-288 (proton acceptor) is an active-site residue. Helical transmembrane passes span 495-515 (LLGAGLLGGGAVLAASAAEAA) and 517-537 (LAAPAAWPAWLMLAAGLYLIV).

The protein belongs to the ABC1 family. UbiB subfamily.

Its subcellular location is the cell inner membrane. It functions in the pathway cofactor biosynthesis; ubiquinone biosynthesis [regulation]. Is probably a protein kinase regulator of UbiI activity which is involved in aerobic coenzyme Q (ubiquinone) biosynthesis. The chain is Probable protein kinase UbiB from Pseudomonas putida (strain W619).